Reading from the N-terminus, the 275-residue chain is S-methyl-5'-thioadenosine phosphorylase (275 aa).

Residues S20, R62–H63, and S95–A96 each bind phosphate. 3 disulfide bridges follow: C143–C210, C205–C266, and C264–C267. M195 contributes to the substrate binding site. T196 contributes to the phosphate binding site. D219 to D221 provides a ligand contact to substrate.

The protein belongs to the PNP/MTAP phosphorylase family. MTAP subfamily. As to quaternary structure, homohexamer. Dimer of a homotrimer.

The catalysed reaction is S-methyl-5'-thioadenosine + phosphate = 5-(methylsulfanyl)-alpha-D-ribose 1-phosphate + adenine. Its pathway is amino-acid biosynthesis; L-methionine biosynthesis via salvage pathway; S-methyl-5-thio-alpha-D-ribose 1-phosphate from S-methyl-5'-thioadenosine (phosphorylase route): step 1/1. In terms of biological role, catalyzes the reversible phosphorylation of S-methyl-5'-thioadenosine (MTA) to adenine and 5-methylthioribose-1-phosphate. Involved in the breakdown of MTA, a major by-product of polyamine biosynthesis. Responsible for the first step in the methionine salvage pathway after MTA has been generated from S-adenosylmethionine. Has broad substrate specificity with 6-aminopurine nucleosides as preferred substrates. In Aeropyrum pernix (strain ATCC 700893 / DSM 11879 / JCM 9820 / NBRC 100138 / K1), this protein is S-methyl-5'-thioadenosine phosphorylase.